The primary structure comprises 564 residues: Dihydropyrimidinase-related protein 5 (564 aa).

Residues Thr-509 and Thr-514 each carry the phosphothreonine modification. Residues Ser-532 and Ser-538 each carry the phosphoserine modification. Arg-559 carries the post-translational modification Omega-N-methylarginine.

It belongs to the metallo-dependent hydrolases superfamily. Hydantoinase/dihydropyrimidinase family. In terms of assembly, homotetramer, and heterotetramer with other DPYS-like proteins. Interacts with DPYSL2, DPYSL3 and DPYSL4. Interacts with SEPTIN4 isoform 4. Interacts with MAP2 and TUBB3. As to expression, detected in brain.

It is found in the cytoplasm. Involved in the negative regulation of dendrite outgrowth. The polypeptide is Dihydropyrimidinase-related protein 5 (Dpysl5) (Mus musculus (Mouse)).